The chain runs to 213 residues: MVSVDQVKKAREGKKRRFTQTFELIFNLKNVDLRKYRLSTYIVLPRGRGKKMPILAIVGPENKELAEKYFDIVLTREDLKQLDKRTAKKLAKRHYHVVAQADLMPELGKSLLGRFLGIRGKMPNPKAGQILPPNLNEKMLEALREKLNNTVRVNVKKHVTFGVPIGTEDMEDEAIAENADTVINEIISQLPQGKQNIDSVYLKLTMGPAVRVL.

It belongs to the universal ribosomal protein uL1 family. As to quaternary structure, part of the 50S ribosomal subunit.

Binds directly to 23S rRNA. Probably involved in E site tRNA release. In terms of biological role, protein L1 is also a translational repressor protein, it controls the translation of its operon by binding to its mRNA. The sequence is that of Large ribosomal subunit protein uL1 from Nanoarchaeum equitans (strain Kin4-M).